The following is a 2776-amino-acid chain: Microtubule-associated protein 1A (2776 aa).

Phosphoserine occurs at positions 114, 117, 118, 121, and 155. Tyr-177 carries the post-translational modification Phosphotyrosine. Residues 310-331 (PSKIKHRADSKESLKAAPKTAM) are disordered. 2 positions are modified to phosphoserine: Ser-319 and Ser-322. Repeat unit 1 spans residues 336–338 (KRE). The segment at 336–541 (KREEVLEEGA…TQDFEELKRE (206 aa)) is 11 X 3 AA approximate repeats of K-K-[DE]. Basic and acidic residues predominate over residues 345–390 (AKEARSELAKELAKSEKKAKEPSEKPPEKPSKPERVRTESSEALKA). Disordered regions lie at residues 345-678 (AKEA…KAES), 738-809 (TIPG…TELT), 846-1076 (EDQS…AGGQ), 1094-1210 (ETGE…ESLG), 1223-1651 (EKGP…SPEQ), 1685-1729 (DGQG…FKDF), 1744-1848 (LAES…APFS), and 1866-2648 (AELE…NGLK). Ser-384 is subject to Phosphoserine. The segment covering 391–406 (EKRKLIKDKVGKKHLK) has biased composition (basic residues). 2 stretches are compositionally biased toward basic and acidic residues: residues 407-464 (EKIS…KPDL) and 484-500 (LKVD…ELSS). 9 repeat units span residues 415–417 (KRD), 420–422 (KKE), 424–426 (KKE), 427–429 (RKE), 431–433 (KKE), 436–438 (RKE), 440–442 (KKD), 444–446 (KKD), and 449–451 (RKD). Phosphothreonine is present on Thr-504. Residues Ser-526 and Ser-527 each carry the phosphoserine modification. Basic and acidic residues predominate over residues 536-556 (EELKREERGLLAEPRDTELGE). The stretch at 539 to 541 (KRE) is repeat 11. A compositionally biased stretch (polar residues) spans 567–579 (GRPSTAIQVTQPP). The span at 587–631 (QVEREKEVVPDFPEDKGSKNRAPDSGAEVEREKETWEERKPREAE) shows a compositional bias: basic and acidic residues. Residues Ser-604 and Ser-611 each carry the phosphoserine modification. Thr-633 is subject to Phosphothreonine. Positions 640-667 (AREESEPEVKEDVIEKAELEEMEEVHPS) are enriched in basic and acidic residues. A phosphoserine mark is found at Ser-644, Ser-667, Ser-678, and Ser-786. Composition is skewed to polar residues over residues 785–800 (ASQS…SSKT), 846–859 (EDQS…PQTE), and 870–882 (TVTS…TEAT). 4 positions are modified to phosphoserine: Ser-873, Ser-876, Ser-877, and Ser-890. Thr-893 is modified (phosphothreonine). Ser-895, Ser-899, and Ser-908 each carry phosphoserine. The segment covering 944-954 (VTTSEKLSSQY) has biased composition (polar residues). Ser-981, Ser-991, Ser-999, Ser-1008, Ser-1014, Ser-1023, and Ser-1062 each carry phosphoserine. The residue at position 1068 (Thr-1068) is a Phosphothreonine. Low complexity predominate over residues 1096–1105 (GEAGAASGAG). Basic and acidic residues predominate over residues 1112 to 1124 (RTQEPAEPQKDEL). Ser-1131, Ser-1133, Ser-1147, Ser-1159, Ser-1177, Ser-1187, Ser-1190, Ser-1196, Ser-1205, and Ser-1208 each carry phosphoserine. The span at 1179 to 1189 (EDTQSLSFSEE) shows a compositional bias: polar residues. A compositionally biased stretch (polar residues) spans 1197–1210 (LDISSKQLSPESLG). Basic and acidic residues predominate over residues 1223-1234 (EKGPLVKAEDNS). Residues Ser-1251, Ser-1289, Ser-1310, Ser-1313, and Ser-1316 each carry the phosphoserine modification. The span at 1302 to 1317 (TSDSSLTKSPESLSSP) shows a compositional bias: low complexity. Composition is skewed to basic and acidic residues over residues 1332–1350 (GSED…RKSE), 1370–1384 (SVMH…EENK), 1391–1435 (KTSE…KALE), 1449–1488 (PRAR…RAPE), 1499–1541 (RAPE…DQDN), and 1549–1599 (GTLK…EKTR). Residues Ser-1516, Ser-1580, and Ser-1606 each carry the phosphoserine modification. Residues 1609 to 1625 (EEGKAREQEEKYWKEQD) are compositionally biased toward basic and acidic residues. Residues Ser-1634 and Ser-1648 each carry the phosphoserine modification. The span at 1709–1718 (QEITPLQHTP) shows a compositional bias: polar residues. Ser-1720, Ser-1747, Ser-1762, Ser-1768, and Ser-1772 each carry phosphoserine. The residue at position 1777 (Thr-1777) is a Phosphothreonine. A phosphoserine mark is found at Ser-1783 and Ser-1789. Residues 1794 to 1808 (TKSTPPTRNEPTTPS) are compositionally biased toward polar residues. The segment covering 1823–1844 (LPPAPLSPAPAPPTPAPDPHAP) has biased composition (pro residues). Positions 1878-1890 (KDYRKAEGEREGE) are enriched in basic and acidic residues. Phosphoserine is present on Ser-1902. Composition is skewed to basic and acidic residues over residues 1907 to 1935 (EVTE…DERS) and 1972 to 1988 (STKE…EKEL). Thr-1928 carries the phosphothreonine modification. The segment covering 1990–2006 (SAVSPPNLHSDTPTFSY) has biased composition (polar residues). Residue Ser-1993 is modified to Phosphoserine. Pro residues predominate over residues 2013–2039 (TIPPRQEPEPGPNVEPSFTPPAVPPRA). Thr-2031 is modified (phosphothreonine). Polar residues predominate over residues 2042–2058 (SLSQDPSPPLNGSTTSC). Phosphoserine occurs at positions 2048 and 2082. A compositionally biased stretch (basic and acidic residues) spans 2060–2096 (PDRRTPSPKEAGRSHWDDGTNDSDLEKGAREQPEKET). Positions 2149 to 2158 (PAPPQLPSPA) are enriched in pro residues. Phosphoserine is present on residues Ser-2209, Ser-2226, Ser-2230, Ser-2233, and Ser-2234. Over residues 2231-2242 (EGSSSEATTPVI) the composition is skewed to polar residues. The span at 2279 to 2292 (PLSPAPLASRDLAP) shows a compositional bias: low complexity. The span at 2355 to 2367 (AEKEEAEALHAWE) shows a compositional bias: basic and acidic residues. The residue at position 2425 (Ser-2425) is a Phosphoserine. Residues 2478–2490 (SASDSGSSQSDSD) are compositionally biased toward low complexity. A compositionally biased stretch (pro residues) spans 2535–2551 (DPPPAPLPDPRPPPPRP). Positions 2566–2576 (GRVERLREKVQ) are enriched in basic and acidic residues. Ser-2623 and Ser-2637 each carry phosphoserine.

This sequence belongs to the MAP1 family. In terms of assembly, 3 different light chains, LC1 (a cleavage product of MAP1B), LC2 (a cleavage product of MAP1A) and LC3 (produced by one of the MAP1LC3 genes), can associate with the MAP1A or MAP1B heavy chains. Interacts with guanylate kinase-like domain of DLG1, DLG2 and DLG4. Binds to CSNK1D. Interacts with TIAM2. Interacts with ELAVL4. In terms of processing, phosphorylated by CSNK1D. Post-translationally, LC2 is generated from MAP1A by proteolytic processing. It is free to associate with both MAP1A and MAP1B. Both isoforms highly expressed in brain, and to a lesser extent in embryo. Isoform 1 is also expressed at a low level in other tissues including heart and muscle.

It is found in the cytoplasm. The protein localises to the cytoskeleton. Its function is as follows. Structural protein involved in the filamentous cross-bridging between microtubules and other skeletal elements. The polypeptide is Microtubule-associated protein 1A (Map1a) (Mus musculus (Mouse)).